The primary structure comprises 262 residues: Bacteriorhodopsin (262 aa).

The propeptide occupies 1–13 (MLELLPTAVEGVS). Q14 is subject to Pyrrolidone carboxylic acid. The Extracellular segment spans residues 14–22 (QAQITGRPE). A helical transmembrane segment spans residues 23-42 (WIWLALGTALMGLGTLYFLV). Over 43 to 56 (KGMGVSDPDAKKFY) the chain is Cytoplasmic. A helical transmembrane segment spans residues 57–75 (AITTLVPAIAFTMYLSMLL). At 76–92 (GYGLTMVPFGGEQNPIY) the chain is on the extracellular side. The chain crosses the membrane as a helical span at residues 93-109 (WARYADWLFTTPLLLLD). Residues 110–120 (LALLVDADQGT) are Cytoplasmic-facing. A helical transmembrane segment spans residues 121 to 140 (ILALVGADGIMIGTGLVGAL). The Extracellular segment spans residues 141-147 (TKVYSYR). Residues 148 to 167 (FVWWAISTAAMLYILYVLFF) traverse the membrane as a helical segment. At 168–185 (GFTSKAESMRPEVASTFK) the chain is on the cytoplasmic side. The helical transmembrane segment at 186–204 (VLRNVTVVLWSAYPVVWLI) threads the bilayer. Residues 205-216 (GSEGAGIVPLNI) lie on the Extracellular side of the membrane. Residues 217–236 (ETLLFMVLDVSAKVGFGLIL) form a helical membrane-spanning segment. At K229 the chain carries N6-(retinylidene)lysine. Residues 237–262 (LRSRAIFGEAEAPEPSAGDGAAATSD) are Cytoplasmic-facing.

As to quaternary structure, homotrimer. In terms of processing, the covalent binding of retinal to the apoprotein, bacterioopsin, generates bacteriorhodopsin.

The protein resides in the cell membrane. Functionally, light-driven proton pump. The sequence is that of Bacteriorhodopsin (bop) from Halobacterium salinarum (strain ATCC 700922 / JCM 11081 / NRC-1) (Halobacterium halobium).